The chain runs to 228 residues: Methyltransferase verB (228 aa).

The protein belongs to the methyltransferase superfamily.

It functions in the pathway secondary metabolite biosynthesis; terpenoid biosynthesis. The protein operates within mycotoxin biosynthesis. Its function is as follows. Methyltransferase; part of the gene cluster that mediates the biosynthesis of the neurotoxin verrucosidin, a methylated alpha-pyrone polyketide that inhibits oxidative phosphorylation in mitochondria and thereby causes neurological diseases. The carbon backbone of verrucosidin is synthesized by the HR-PKS verA, and further modified by the other verrucodidin cluster enzymes. This Penicillium polonicum protein is Methyltransferase verB.